Consider the following 541-residue polypeptide: MPQTKGKPHEEQLEQYKNSQTKPFVLTTSNGAPIFNKKASLTVGPRGPLLLQDVVFLDEMAHFDRERIPERVVHAKGGGAHGFFEVTDDITKYCKADVFSTIGKRTPIFIRFSTVGGELGSADTQRDPRGFAIKFYTEEGNWDLVGNNTPIFFIRDPIFFPNFIHTQKRNPVTHLKDPNMMWDFFSLRPETTHQVMILFGDRGIPDGFRHMDGFGSHTFKLVNKDGNAVYCKFHIKTAQGIRNLPPDVAIKLAGEDPDYSIRDLYDSIENGNYPVWRLMIQVMTFEEAANYRFNPFDITKVWSHKEFPLILVGKIVLNKNPTNYFAEVEQIAFAPSHVVPGIEFSPDKMLQGRLFAYPDTQFHRLGPNYVQLPINCPYRSRAHNTQRDGCFALDYNQGGMPTYHPNSFNGAIERTDVKESAWSVSGDVDRFNGDDEDNFSQPRDLWLKVMDETERARLVDNIADSLKYCKAFIQERAINNFTQVHQDFGNALRNALQKANEAMQKKREEEAEFNAKESVMMPCAIDDRMKNISNLAKYCKY.

Residues 1–20 (MPQTKGKPHEEQLEQYKNSQ) form a disordered region. Residues H74 and N147 contribute to the active site. Residue Y357 coordinates heme.

Belongs to the catalase family. Heme serves as cofactor.

Its subcellular location is the peroxisome matrix. It carries out the reaction 2 H2O2 = O2 + 2 H2O. Its function is as follows. Catalyzes the degradation of hydrogen peroxide (H(2)O(2)) generated by peroxisomal oxidases to water and oxygen, thereby protecting cells from the toxic effects of hydrogen peroxide. The sequence is that of Catalase (CAT) from Ascaris suum (Pig roundworm).